Consider the following 277-residue polypeptide: 4-hydroxy-tetrahydrodipicolinate reductase (277 aa).

NAD(+) contacts are provided by residues Gly11–Met16 and Gly110–Thr112. The Proton donor/acceptor role is filled by His166. Residue His167 coordinates (S)-2,3,4,5-tetrahydrodipicolinate. The active-site Proton donor is Lys170. Gly176–Thr177 is a (S)-2,3,4,5-tetrahydrodipicolinate binding site.

Belongs to the DapB family.

The protein localises to the cytoplasm. The catalysed reaction is (S)-2,3,4,5-tetrahydrodipicolinate + NAD(+) + H2O = (2S,4S)-4-hydroxy-2,3,4,5-tetrahydrodipicolinate + NADH + H(+). The enzyme catalyses (S)-2,3,4,5-tetrahydrodipicolinate + NADP(+) + H2O = (2S,4S)-4-hydroxy-2,3,4,5-tetrahydrodipicolinate + NADPH + H(+). Its pathway is amino-acid biosynthesis; L-lysine biosynthesis via DAP pathway; (S)-tetrahydrodipicolinate from L-aspartate: step 4/4. Catalyzes the conversion of 4-hydroxy-tetrahydrodipicolinate (HTPA) to tetrahydrodipicolinate. The polypeptide is 4-hydroxy-tetrahydrodipicolinate reductase (Synechococcus sp. (strain CC9605)).